The sequence spans 325 residues: Acetyl-coenzyme A carboxylase carboxyl transferase subunit alpha (325 aa).

Positions 38-292 constitute a CoA carboxyltransferase C-terminal domain; the sequence is KLEKRLHALE…DQVLEKSLKQ (255 aa).

It belongs to the AccA family. Acetyl-CoA carboxylase is a heterohexamer composed of biotin carboxyl carrier protein (AccB), biotin carboxylase (AccC) and two subunits each of ACCase subunit alpha (AccA) and ACCase subunit beta (AccD).

It localises to the cytoplasm. The enzyme catalyses N(6)-carboxybiotinyl-L-lysyl-[protein] + acetyl-CoA = N(6)-biotinyl-L-lysyl-[protein] + malonyl-CoA. The protein operates within lipid metabolism; malonyl-CoA biosynthesis; malonyl-CoA from acetyl-CoA: step 1/1. Functionally, component of the acetyl coenzyme A carboxylase (ACC) complex. First, biotin carboxylase catalyzes the carboxylation of biotin on its carrier protein (BCCP) and then the CO(2) group is transferred by the carboxyltransferase to acetyl-CoA to form malonyl-CoA. This Halalkalibacterium halodurans (strain ATCC BAA-125 / DSM 18197 / FERM 7344 / JCM 9153 / C-125) (Bacillus halodurans) protein is Acetyl-coenzyme A carboxylase carboxyl transferase subunit alpha.